The chain runs to 442 residues: Betaine reductase complex component B subunit alpha (442 aa).

Heterotetramer of two alpha and two beta subunits. Component of the betaine reductase complex, together with components A and C. PB is substrate specific.

The enzyme catalyses acetyl phosphate + trimethylamine + [thioredoxin]-disulfide + H2O = glycine betaine + [thioredoxin]-dithiol + phosphate + H(+). In the first step of betaine reductase, the substrate is bound to component PB via a Schiff base intermediate. Then the PB-activated substrate is nucleophilically attacked by the selenol anion of component PA to transform it to a carboxymethylated selenoether and the respective amine. By action of component PC, acetyl phosphate is formed, leaving component PA in its oxidized state. Finally component PA becomes reduced by the thioredoxin system to start a new catalytic cycle of reductive deamination. In Peptoclostridium acidaminophilum (Eubacterium acidaminophilum), this protein is Betaine reductase complex component B subunit alpha (grdI).